The sequence spans 354 residues: Rhodopsin (354 aa).

At 1–36 the chain is on the extracellular side; that stretch reads MNGTEGPNFYVPMSNKTGIVRSPFEYPQYYLAEPWK. N-linked (GlcNAc...) asparagine glycosylation is found at N2 and N15. A helical transmembrane segment spans residues 37–61; the sequence is YSVLAAYMFLLILLGLPINFMTLYV. The Cytoplasmic portion of the chain corresponds to 62-73; it reads TIQHKKLRTPLN. The chain crosses the membrane as a helical span at residues 74–96; sequence YILLNLAFANHFMVLCGFTITMY. The Extracellular portion of the chain corresponds to 97–110; that stretch reads TSLHGYFVFGQTGC. C110 and C187 form a disulfide bridge. Residues 111–133 form a helical membrane-spanning segment; sequence YFEGFFATLGGEIALWSLVVLAI. The short motif at 134–136 is the 'Ionic lock' involved in activated form stabilization element; the sequence is ERY. Over 134-152 the chain is Cytoplasmic; that stretch reads ERYIVVCKPMSNFRFGENH. Residues 153-173 form a helical membrane-spanning segment; it reads AMMGVAFTWIMALACAVPPLF. The Extracellular segment spans residues 174 to 202; that stretch reads GWSRYIPEGMQCSCGVDYYTLKPEVNNES. The helical transmembrane segment at 203–224 threads the bilayer; it reads FVIYMFVVHFLIPLIIISFCYG. The Cytoplasmic portion of the chain corresponds to 225-252; sequence RLVCTVKEAAAQQQESATTQKAEKEVTR. The helical transmembrane segment at 253–274 threads the bilayer; that stretch reads MVVIMVIFFLICWVPYAYVAFY. Residues 275-286 are Extracellular-facing; sequence IFTHQGSEFGPI. The helical transmembrane segment at 287 to 308 threads the bilayer; that stretch reads FMTVPAFFAKSSAIYNPVIYIM. K296 bears the N6-(retinylidene)lysine mark. Residues 309 to 354 lie on the Cytoplasmic side of the membrane; it reads LNKQFRNCMITTLCCGKNPFGDEDASSAATSKTEATSVSTSQVSPA. Residues C322 and C323 are each lipidated (S-palmitoyl cysteine). A disordered region spans residues 331-354; it reads EDASSAATSKTEATSVSTSQVSPA. Over residues 334–354 the composition is skewed to low complexity; it reads SSAATSKTEATSVSTSQVSPA.

Belongs to the G-protein coupled receptor 1 family. Opsin subfamily. Contains one covalently linked retinal chromophore. Upon light absorption, the covalently bound 11-cis-retinal is converted to all-trans-retinal. After hydrolysis of the Schiff base and release of the covalently bound all-trans-retinal, active rhodopsin is regenerated by binding of a fresh molecule of 11-cis-retinal. Retina. Localized in the ventral part of the retina.

It localises to the membrane. It is found in the cell projection. The protein resides in the cilium. The protein localises to the photoreceptor outer segment. Its function is as follows. Photoreceptor required for image-forming vision at low light intensity. Required for photoreceptor cell viability after birth. May use a mixture of retinal and 3-dehydroretinal as visual pigment. Light-induced isomerization of 11-cis to all-trans retinal triggers a conformational change that activates signaling via G-proteins. Subsequent receptor phosphorylation mediates displacement of the bound G-protein alpha subunit by arrestin and terminates signaling. The sequence is that of Rhodopsin (RHO) from Aquarana catesbeiana (American bullfrog).